A 673-amino-acid polypeptide reads, in one-letter code: Protein kinase C delta type (673 aa).

One can recognise a C2 domain in the interval 1–106 (MAPFLRISFN…KNNGKAEFWL (106 aa)). Thr-43 and Thr-50 each carry phosphothreonine. Tyr-64 carries the phosphotyrosine modification. Ser-130 carries the post-translational modification Phosphoserine. At Thr-141 the chain carries Phosphothreonine. Phosphotyrosine is present on Tyr-155. Residues 158-208 (NHEFIATFFGQPTFCSVCKEFVWGLNKQGYKCRQCNAAIHKKCIDKIIGRC) form a Phorbol-ester/DAG-type 1 zinc finger. Residue Thr-218 is modified to Phosphothreonine. The segment at 230 to 280 (PHRFKVYNYMSPTFCDHCGTLLWGLVKQGLKCEDCGMNVHHKCREKVANLC) adopts a Phorbol-ester/DAG-type 2 zinc-finger fold. Phosphoserine; by autocatalysis is present on Ser-299. 2 positions are modified to phosphotyrosine; by SRC: Tyr-311 and Tyr-332. The Protein kinase domain occupies 347-601 (FTFQKVLGKG…TGNIRLHPFF (255 aa)). 353 to 361 (LGKGSFGKV) provides a ligand contact to ATP. Tyr-372 bears the Phosphotyrosine mark. Lys-376 provides a ligand contact to ATP. At Thr-449 the chain carries Phosphothreonine. Asp-471 serves as the catalytic Proton acceptor. Ser-504 is subject to Phosphoserine. Thr-505 is modified (phosphothreonine; by autocatalysis). A Phosphotyrosine modification is found at Tyr-565. The 72-residue stretch at 602 to 673 (KTINWNLLEK…VNPKYEQFLE (72 aa)) folds into the AGC-kinase C-terminal domain. Ser-643, Ser-652, and Ser-662 each carry phosphoserine.

This sequence belongs to the protein kinase superfamily. AGC Ser/Thr protein kinase family. PKC subfamily. In terms of assembly, interacts with PDPK1 (via N-terminal region). Interacts with RAD9A. Interacts with CDCP1. Interacts with MUC1. Interacts with VASP. Interacts with CAVIN3. Interacts with PRKD2 (via N-terminus and zing-finger domain 1 and 2) in response to oxidative stress; the interaction is independent of PRKD2 tyrosine phosphorylation. Interacts with PLSC3; interaction is enhanced by UV irradiation. Post-translationally, autophosphorylated and/or phosphorylated at Thr-505, within the activation loop; phosphorylation at Thr-505 is not a prerequisite for enzymatic activity. Autophosphorylated at Ser-299. Upon TNFSF10/TRAIL treatment, phosphorylated at Tyr-155; phosphorylation is required for its translocation to the endoplasmic reticulum and cleavage by caspase-3. Phosphorylated at Tyr-311, Tyr-332 and Tyr-565; phosphorylation of Tyr-311 and Tyr-565 following thrombin or zymosan stimulation potentiates its kinase activity. Phosphorylated by protein kinase PDPK1; phosphorylation is inhibited by the apoptotic C-terminal cleavage product of PKN2. Phosphorylated at Tyr-311 and Tyr-332 by SRC; phosphorylation leads to enhanced autophosphorylation at Thr-505. Phosphorylated at Tyr-311 through a SYK and SRC mechanism downstream of C-type lectin receptors activation, promoting its activation. In terms of processing, proteolytically cleaved into a catalytic subunit and a regulatory subunit by caspase-3 during apoptosis which results in kinase activation.

It is found in the cytoplasm. It localises to the nucleus. Its subcellular location is the perinuclear region. The protein localises to the cell membrane. The protein resides in the mitochondrion. It is found in the endomembrane system. The catalysed reaction is L-seryl-[protein] + ATP = O-phospho-L-seryl-[protein] + ADP + H(+). It carries out the reaction L-threonyl-[protein] + ATP = O-phospho-L-threonyl-[protein] + ADP + H(+). The enzyme catalyses L-tyrosyl-[protein] + ATP = O-phospho-L-tyrosyl-[protein] + ADP + H(+). Its activity is regulated as follows. Novel PKCs (PRKCD, PRKCE, PRKCH and PRKCQ) are calcium-insensitive, but activated by diacylglycerol (DAG) and phosphatidylserine. Three specific sites; Thr-505 (activation loop of the kinase domain), Ser-643 (turn motif) and Ser-662 (hydrophobic region), need to be phosphorylated for its full activation. Activated by caspase-3 (CASP3) cleavage during apoptosis. After cleavage, the pseudosubstrate motif in the regulatory subunit is released from the substrate recognition site of the catalytic subunit, which enables PRKCD to become constitutively activated. The catalytic subunit which displays properties of a sphingosine-dependent protein kinase is activated by D-erythro-sphingosine (Sph) or N,N-dimethyl-D-erythrosphingosine (DMS) or N,N,N-trimethyl-D-erythrosphingosine (TMS), but not by ceramide or Sph-1-P and is strongly inhibited by phosphatidylserine. Its function is as follows. Calcium-independent, phospholipid- and diacylglycerol (DAG)-dependent serine/threonine-protein kinase that plays contrasting roles in cell death and cell survival by functioning as a pro-apoptotic protein during DNA damage-induced apoptosis, but acting as an anti-apoptotic protein during cytokine receptor-initiated cell death, is involved in tumor suppression, is required for oxygen radical production by NADPH oxidase and acts as a positive or negative regulator in platelet functional responses. Upon DNA damage, activates the promoter of the death-promoting transcription factor BCLAF1/Btf to trigger BCLAF1-mediated p53/TP53 gene transcription and apoptosis. In response to oxidative stress, interact with and activate CHUK/IKKA in the nucleus, causing the phosphorylation of p53/TP53. In the case of ER stress or DNA damage-induced apoptosis, can form a complex with the tyrosine-protein kinase ABL1 which trigger apoptosis independently of p53/TP53. In cytosol can trigger apoptosis by activating MAPK11 or MAPK14, inhibiting AKT1 and decreasing the level of X-linked inhibitor of apoptosis protein (XIAP), whereas in nucleus induces apoptosis via the activation of MAPK8 or MAPK9. Upon ionizing radiation treatment, is required for the activation of the apoptosis regulators BAX and BAK, which trigger the mitochondrial cell death pathway. Can phosphorylate MCL1 and target it for degradation which is sufficient to trigger for BAX activation and apoptosis. Is required for the control of cell cycle progression both at G1/S and G2/M phases. Mediates phorbol 12-myristate 13-acetate (PMA)-induced inhibition of cell cycle progression at G1/S phase by up-regulating the CDK inhibitor CDKN1A/p21 and inhibiting the cyclin CCNA2 promoter activity. In response to UV irradiation can phosphorylate CDK1, which is important for the G2/M DNA damage checkpoint activation. Can protect glioma cells from the apoptosis induced by TNFSF10/TRAIL, probably by inducing increased phosphorylation and subsequent activation of AKT1. Can also act as tumor suppressor upon mitogenic stimulation with PMA or TPA. In N-formyl-methionyl-leucyl-phenylalanine (fMLP)-treated cells, is required for NCF1 (p47-phox) phosphorylation and activation of NADPH oxidase activity, and regulates TNF-elicited superoxide anion production in neutrophils, by direct phosphorylation and activation of NCF1 or indirectly through MAPK1/3 (ERK1/2) signaling pathways. Involved in antifungal immunity by mediating phosphorylation and activation of CARD9 downstream of C-type lectin receptors activation, promoting interaction between CARD9 and BCL10, followed by activation of NF-kappa-B and MAP kinase p38 pathways. May also play a role in the regulation of NADPH oxidase activity in eosinophil after stimulation with IL5, leukotriene B4 or PMA. In collagen-induced platelet aggregation, acts a negative regulator of filopodia formation and actin polymerization by interacting with and negatively regulating VASP phosphorylation. Downstream of PAR1, PAR4 and CD36/GP4 receptors, regulates differentially platelet dense granule secretion; acts as a positive regulator in PAR-mediated granule secretion, whereas it negatively regulates CD36/GP4-mediated granule release. Phosphorylates MUC1 in the C-terminal and regulates the interaction between MUC1 and beta-catenin. The catalytic subunit phosphorylates 14-3-3 proteins (YWHAB, YWHAZ and YWHAH) in a sphingosine-dependent fashion. Phosphorylates ELAVL1 in response to angiotensin-2 treatment. Phosphorylates mitochondrial phospholipid scramblase 3 (PLSCR3), resulting in increased cardiolipin expression on the mitochondrial outer membrane which facilitates apoptosis. Phosphorylates SMPD1 which induces SMPD1 secretion. Truncated isoform 2 is inactive. The polypeptide is Protein kinase C delta type (Rattus norvegicus (Rat)).